The chain runs to 302 residues: Endochitinase 2 (302 aa).

Residues 1-42 (EQCGRQAGGALCPGGLCCSQFGWCGSTADYCTVPGCQSQCSG) form the Chitin-binding type-1 domain. Intrachain disulfides connect cysteine 3-cysteine 18, cysteine 12-cysteine 24, cysteine 17-cysteine 31, cysteine 36-cysteine 40, cysteine 73-cysteine 136, cysteine 148-cysteine 156, and cysteine 255-cysteine 287. Glutamate 117 acts as the Proton donor in catalysis. Residues 296-302 (GVSVDSM) constitute a propeptide, removed in mature form.

This sequence belongs to the glycosyl hydrolase 19 family. Chitinase class I subfamily.

It carries out the reaction Random endo-hydrolysis of N-acetyl-beta-D-glucosaminide (1-&gt;4)-beta-linkages in chitin and chitodextrins.. Defense against chitin-containing fungal pathogens. This chain is Endochitinase 2, found in Gossypium hirsutum (Upland cotton).